A 422-amino-acid polypeptide reads, in one-letter code: uncharacterized protein (422 aa).

Disordered regions lie at residues 1–21 (MRDNIAKGITAGSNTQQTTYD), 158–218 (TAKS…TEQV), and 246–271 (DFGTAPSSSGSGTQDGTPTPWTPWLT). Over residues 11–21 (AGSNTQQTTYD) the composition is skewed to polar residues. Residues 170–199 (SKSSNGSSSTSTTQRGGSSNENKVKALQVA) show a composition bias toward low complexity. Composition is skewed to polar residues over residues 205–216 (GSQGNSGDQGTE) and 250–261 (APSSSGSGTQDG). Residues 262 to 271 (TPTPWTPWLT) show a composition bias toward low complexity.

The protein belongs to the adhesin P1 family.

This is an uncharacterized protein from Mycoplasma pneumoniae (strain ATCC 29342 / M129 / Subtype 1) (Mycoplasmoides pneumoniae).